We begin with the raw amino-acid sequence, 51 residues long: Putative protein LomR (51 aa).

It belongs to the outer membrane OOP (TC 1.B.6) superfamily. Ail family.

In Escherichia coli (strain K12), this protein is Putative protein LomR (lomR).